The following is a 256-amino-acid chain: Autophagy-related protein 40 (256 aa).

The signal sequence occupies residues 1–16; it reads MFNLILWPLFLLTSVA. Residues 17 to 67 are Lumenal-facing; that stretch reads IPLQLTLEVVYLTSSVDFSKASAAKTATSLGQSPVVITIYKSLLKYWSLYE. Residues 68 to 88 traverse the membrane as a helical segment; that stretch reads FIHFIYLYTPIDAFLNFLPFT. The Cytoplasmic portion of the chain corresponds to 89 to 256; that stretch reads SLLMSFGSIC…DILDETTELD (168 aa). The tract at residues 197–243 is disordered; that stretch reads QPQGDKNRYQNGDRESTKNGAAYQKSSQQSSSFEQNFTSTEFPNDYD. Positions 199–213 are enriched in basic and acidic residues; sequence QGDKNRYQNGDREST. A compositionally biased stretch (low complexity) spans 222–238; the sequence is SSQQSSSFEQNFTSTEF. The ATG8-binding signature appears at 242–245; that stretch reads YDFM.

As to quaternary structure, interacts with ATG8 and ATG11.

It is found in the endoplasmic reticulum membrane. The protein localises to the preautophagosomal structure membrane. In terms of biological role, acts as a receptor for reticulophagy. Directs autophagic sequestration of folded tubules/sheets derived from the cortical endoplasmic reticulum (cER) and the cytoplasmic endoplasmic reticulum (cytoER) into autophagosomes. Is not required for the cytoplasm-to-vacuole targeting pathway, mitophagy, pexophagy, and non-selective autophagy. This chain is Autophagy-related protein 40, found in Saccharomyces cerevisiae (strain ATCC 204508 / S288c) (Baker's yeast).